The primary structure comprises 206 residues: Alpha-1-acid glycoprotein 3 (206 aa).

A signal peptide spans 1–18 (MELHTVLIMLSLLPLLEA). 3 N-linked (GlcNAc...) asparagine glycosylation sites follow: Asn33, Asn75, and Asn103. A disulfide bridge connects residues Cys90 and Cys183. The segment at 187-206 (EKKHLELEKETKKDPEESQA) is disordered.

It belongs to the calycin superfamily. Lipocalin family.

The protein localises to the secreted. Functions as a transport protein in the blood stream. Binds various ligands in the interior of its beta-barrel domain. Appears to function in modulating the activity of the immune system during the acute-phase reaction. The protein is Alpha-1-acid glycoprotein 3 (Orm3) of Mus musculus (Mouse).